The chain runs to 148 residues: D-aminoacyl-tRNA deacylase (148 aa).

The Gly-cisPro motif, important for rejection of L-amino acids motif lies at 136–137 (GP).

It belongs to the DTD family. As to quaternary structure, homodimer.

The protein resides in the cytoplasm. The catalysed reaction is glycyl-tRNA(Ala) + H2O = tRNA(Ala) + glycine + H(+). It carries out the reaction a D-aminoacyl-tRNA + H2O = a tRNA + a D-alpha-amino acid + H(+). An aminoacyl-tRNA editing enzyme that deacylates mischarged D-aminoacyl-tRNAs. Also deacylates mischarged glycyl-tRNA(Ala), protecting cells against glycine mischarging by AlaRS. Acts via tRNA-based rather than protein-based catalysis; rejects L-amino acids rather than detecting D-amino acids in the active site. By recycling D-aminoacyl-tRNA to D-amino acids and free tRNA molecules, this enzyme counteracts the toxicity associated with the formation of D-aminoacyl-tRNA entities in vivo and helps enforce protein L-homochirality. The chain is D-aminoacyl-tRNA deacylase from Kosmotoga olearia (strain ATCC BAA-1733 / DSM 21960 / TBF 19.5.1).